The following is a 397-amino-acid chain: Elongation factor Tu (397 aa).

Residues 10–207 (LPHCNVGTIG…TLDSYIPQPE (198 aa)) enclose the tr-type G domain. Residues 19 to 26 (GHVDHGKT) are G1. 19–26 (GHVDHGKT) is a binding site for GTP. Mg(2+) is bound at residue threonine 26. The tract at residues 60 to 64 (GITIN) is G2. The tract at residues 81 to 84 (DCPG) is G3. GTP is bound by residues 81–85 (DCPGH) and 136–139 (NKAD). Residues 136 to 139 (NKAD) form a G4 region. Positions 174-176 (SAR) are G5.

The protein belongs to the TRAFAC class translation factor GTPase superfamily. Classic translation factor GTPase family. EF-Tu/EF-1A subfamily. As to quaternary structure, monomer.

It is found in the cytoplasm. The enzyme catalyses GTP + H2O = GDP + phosphate + H(+). In terms of biological role, GTP hydrolase that promotes the GTP-dependent binding of aminoacyl-tRNA to the A-site of ribosomes during protein biosynthesis. This chain is Elongation factor Tu, found in Pseudomonas syringae pv. tomato (strain ATCC BAA-871 / DC3000).